Here is a 529-residue protein sequence, read N- to C-terminus: UDP-glucuronosyltransferase 2B11 (529 aa).

A signal peptide spans 1–21; that stretch reads MTLKWTSVLLLIHLSCYFSSG. Residue Lys135 is modified to N6-succinyllysine. Asn315 carries N-linked (GlcNAc...) asparagine glycosylation. A helical transmembrane segment spans residues 493-513; it reads VIGFLLACVATVIFIITKFCL.

The protein belongs to the UDP-glycosyltransferase family. Widely expressed.

The protein localises to the microsome membrane. It localises to the endoplasmic reticulum membrane. The catalysed reaction is glucuronate acceptor + UDP-alpha-D-glucuronate = acceptor beta-D-glucuronoside + UDP + H(+). Functionally, UDPGT is of major importance in the conjugation and subsequent elimination of potentially toxic xenobiotics and endogenous compounds. In Homo sapiens (Human), this protein is UDP-glucuronosyltransferase 2B11 (UGT2B11).